Here is a 664-residue protein sequence, read N- to C-terminus: Methionine--tRNA ligase (664 aa).

The short motif at tyrosine 15 to histidine 25 is the 'HIGH' region element. The 'KMSKS' region signature appears at lysine 310–serine 314. Residue lysine 313 participates in ATP binding. Positions aspartate 563–lysine 664 constitute a tRNA-binding domain.

The protein belongs to the class-I aminoacyl-tRNA synthetase family. MetG type 2B subfamily. As to quaternary structure, homodimer.

It is found in the cytoplasm. It carries out the reaction tRNA(Met) + L-methionine + ATP = L-methionyl-tRNA(Met) + AMP + diphosphate. Its function is as follows. Is required not only for elongation of protein synthesis but also for the initiation of all mRNA translation through initiator tRNA(fMet) aminoacylation. This Listeria innocua serovar 6a (strain ATCC BAA-680 / CLIP 11262) protein is Methionine--tRNA ligase (metG).